A 117-amino-acid polypeptide reads, in one-letter code: Putative membrane protein insertion efficiency factor (117 aa).

The protein belongs to the UPF0161 family.

It localises to the cell inner membrane. Functionally, could be involved in insertion of integral membrane proteins into the membrane. The polypeptide is Putative membrane protein insertion efficiency factor (Bartonella henselae (strain ATCC 49882 / DSM 28221 / CCUG 30454 / Houston 1) (Rochalimaea henselae)).